A 280-amino-acid polypeptide reads, in one-letter code: Lacto-N-neotetraose biosynthesis glycosyltransferase LgtE (280 aa).

It belongs to the glycosyltransferase 25 family.

Its pathway is glycan metabolism; lacto-N-neotetraose biosynthesis. It functions in the pathway bacterial outer membrane biogenesis; lipooligosaccharide biosynthesis. Adds the first galactose to the lacto-N-tetraose chain in lipooligosaccharide (LOS). This is Lacto-N-neotetraose biosynthesis glycosyltransferase LgtE (lgtE) from Neisseria gonorrhoeae.